Consider the following 358-residue polypeptide: Methylthioribose-1-phosphate isomerase (358 aa).

Residues 54 to 56 (RGA), Arg96, and Gln205 contribute to the substrate site. Asp246 serves as the catalytic Proton donor. 256–257 (NK) is a substrate binding site.

Belongs to the eIF-2B alpha/beta/delta subunits family. MtnA subfamily.

The enzyme catalyses 5-(methylsulfanyl)-alpha-D-ribose 1-phosphate = 5-(methylsulfanyl)-D-ribulose 1-phosphate. It functions in the pathway amino-acid biosynthesis; L-methionine biosynthesis via salvage pathway; L-methionine from S-methyl-5-thio-alpha-D-ribose 1-phosphate: step 1/6. Functionally, catalyzes the interconversion of methylthioribose-1-phosphate (MTR-1-P) into methylthioribulose-1-phosphate (MTRu-1-P). This is Methylthioribose-1-phosphate isomerase from Ectopseudomonas mendocina (strain ymp) (Pseudomonas mendocina).